We begin with the raw amino-acid sequence, 966 residues long: Next to BRCA1 gene 1 protein (966 aa).

Positions 4 to 85 constitute a PB1 domain; that stretch reads QVTLNVTFKN…NQLQMQVHEG (82 aa). A Phosphoserine modification is found at Ser116. Residues 212-264 form a ZZ-type zinc finger; that stretch reads SWHIACNNCQRRIVGVRYQCSLCPSYNICEDCEAGPYGHDTNHVLLKLRRPVV. Residues Cys217, Cys220, Cys231, Cys234, Cys240, Cys243, His250, and His254 each contribute to the Zn(2+) site. The ATG8 family protein-binding stretch occupies residues 542–636; that stretch reads ASERELYIPS…KRKAENIASV (95 aa). Phosphothreonine; by GSK3-alpha is present on Thr586. A phosphoserine mark is found at Ser590, Ser596, and Ser625. A compositionally biased stretch (acidic residues) spans 699-718; sequence EAVMEEEEDEEDEEEEDELK. Disordered regions lie at residues 699–728, 750–792, and 848–879; these read EAVM…SSAS, MYSS…QPQE, and VPDQ…HHGS. The interval 727-738 is ATG8 family protein-binding; it reads ASSEDYIIILPE. The UBA domain occupies 913-957; sequence SEDQTAALMAHLFEMGFCDRQLNLRLLKKHNYNILQVVTELLQLN.

Homooligomer and heterooligomer. Interacts with TRIM55. Interacts with titin/TTN. Interacts with RNF29, USP8, MAP1LC3A, MAP1LC3B, MAP1LC3C, GABARAP, GABARAPL1 and GABARAPL2. Binds to ubiquitin and ubiquitinated proteins. Interacts with SQSTM1. Interacts with TAX1BP1. Interacts with IRF3; this interaction mediates autophagic degradation of IRF3. Interacts with IL12A and IL12B. In terms of assembly, (Microbial infection) Interacts with Influenza A virus protein PB1; this interaction promotes NBR1-mediated selective autophagic degradation of MAVS. (Microbial infection) Cleaved by S.pyogenes SpeB protease; leading to its degradation. Degradation by SpeB prevents autophagy, promoting to S.pyogenes intracellular replication. Post-translationally, phosphorylated by GSK3A; this phosphorylation inhibits NBR1 involvement in the formation of ubiquitinated protein aggregates.

It localises to the cytoplasm. Its subcellular location is the cytoplasmic vesicle. It is found in the autophagosome. The protein localises to the lysosome. The protein resides in the myofibril. It localises to the sarcomere. Its subcellular location is the m line. In terms of biological role, ubiquitin-binding autophagy adapter that participates in different processes including host defense or intracellular homeostasis. Possesses a double function during the selective autophagy by acting as a shuttle bringing ubiquitinated proteins to autophagosomes and also by participating in the formation of protein aggregates. Plays a role in the regulation of the innate immune response by modulating type I interferon production and targeting ubiquitinated IRF3 for autophagic degradation. In response to oxidative stress, promotes an increase in SQSTM1 levels, phosphorylation, and body formation by preventing its autophagic degradation. In turn, activates the KEAP1-NRF2/NFE2L2 antioxidant pathway. Also plays non-autophagy role by mediating the shuttle of IL-12 to late endosome for subsequent secretion. The protein is Next to BRCA1 gene 1 protein (NBR1) of Homo sapiens (Human).